The chain runs to 126 residues: Protein ApaG (126 aa).

In terms of domain architecture, ApaG spans 2-126 (SDPRYQIDVS…FRLAVPGALH (125 aa)).

The protein is Protein ApaG of Ectopseudomonas mendocina (strain ymp) (Pseudomonas mendocina).